A 217-amino-acid chain; its full sequence is MGQKVCAHGFRVGPTLIKGWDSVLYAEKHYKTLFIQDLKIRDLINKGFNQAQVSRVLIERPSNKSIIISINAKKPNIIIGRNGSEIDKLKKAIEKMTFLKEVYINIHEVRKFNIDAAIVAQTIALQLEKRVSFRKAMKTAIQASLKQGGQGIRVSCSGRLGGAEIARTEWYIEGRMPLHTLRADIDYSTAEAITTYGVIGVKVWIYKGEYTENKRYN.

Residues 40 to 110 (IRDLINKGFN…EVYINIHEVR (71 aa)) enclose the KH type-2 domain.

This sequence belongs to the universal ribosomal protein uS3 family. In terms of assembly, part of the 30S ribosomal subunit. Forms a tight complex with proteins S10 and S14.

Functionally, binds the lower part of the 30S subunit head. Binds mRNA in the 70S ribosome, positioning it for translation. The sequence is that of Small ribosomal subunit protein uS3 from Rickettsia akari (strain Hartford).